Here is a 137-residue protein sequence, read N- to C-terminus: MILGIGTDLANIDRMEKTLARFGERFRNRVFTPLEQAKAERRADVAGTYAKRWAAKEACSKALGTGLRMGISWKDMSVANLETGQPVMRLTGWAAERLASMTPPGHEAVVHVSLTDDHPWAQAFVVIEARPRAAPPA.

Asp-8 and Glu-57 together coordinate Mg(2+).

The protein belongs to the P-Pant transferase superfamily. AcpS family. Mg(2+) serves as cofactor.

The protein resides in the cytoplasm. The catalysed reaction is apo-[ACP] + CoA = holo-[ACP] + adenosine 3',5'-bisphosphate + H(+). Functionally, transfers the 4'-phosphopantetheine moiety from coenzyme A to a Ser of acyl-carrier-protein. This Cereibacter sphaeroides (strain ATCC 17029 / ATH 2.4.9) (Rhodobacter sphaeroides) protein is Holo-[acyl-carrier-protein] synthase.